The primary structure comprises 1348 residues: Kinesin-like protein KIF7 (1348 aa).

Residues 15-349 (PVRVALRVRP…LNYASRAQNI (335 aa)) enclose the Kinesin motor domain. ATP is bound at residue 94–101 (GQTGSGKT). The tract at residues 358–479 (HPEAERVPEE…EDQAAQGTSG (122 aa)) is interaction with DLG5. Residues 358 to 1211 (HPEAERVPEE…LGRHMWINQE (854 aa)) form an interaction with SMO region. 2 disordered regions span residues 451–486 (RSTLSSASGPDSGIESAPAEDQAAQGTSGRKGDEGT) and 607–674 (AQAD…VCPE). Residues 480-542 (RKGDEGTQQL…ELRLRLELAQ (63 aa)) adopt a coiled-coil conformation. Residues 620–636 (SEEEGEEEEEEEEEEEE) are compositionally biased toward acidic residues. Coiled-coil stretches lie at residues 698–1057 (APAA…IEAL) and 1109–1211 (FDKV…INQE). Ser-903 is modified (phosphoserine). 2 disordered regions span residues 1288–1314 (LCSEQGSSEESRVRETTEPPVGRVLPM) and 1328–1348 (KPRWEPRRTSPGMIDVRKNPL).

The protein belongs to the TRAFAC class myosin-kinesin ATPase superfamily. Kinesin family. As to quaternary structure, can form homodimers and interacts with microtubules. Interacts with GLI1 and SMO. Interacts with GLI2, GLI3 and SUFU. Interacts with NPHP1. Interacts with SMO and DLG5 (via PDZ4 or guanylate kinase-like domain). In terms of processing, polyubiquitinated by UBR3. In terms of tissue distribution, expressed in heart, lung, liver, kidney, testis, spleen and cerebellum.

Its subcellular location is the cell projection. The protein resides in the cilium. It localises to the cytoplasm. The protein localises to the cytoskeleton. It is found in the cilium basal body. Its function is as follows. Essential for hedgehog signaling regulation: acts both as a negative and a positive regulator of sonic hedgehog (Shh) and Indian hedgehog (Ihh) pathways, acting downstream of SMO, through both SUFU-dependent and -independent mechanisms. Involved in the regulation of microtubular dynamics. Required for proper organization of the ciliary tip and control of ciliary localization of SUFU-GLI2 complexes. Required for localization of GLI3 to cilia in response to Shh. Negatively regulates Shh signaling by preventing inappropriate activation of the transcriptional activator GLI2 in the absence of ligand. Positively regulates Shh signaling by preventing the processing of the transcription factor GLI3 into its repressor form. In keratinocytes, promotes the dissociation of SUFU-GLI2 complexes, GLI2 nuclear translocation and Shh signaling activation. Involved in the regulation of epidermal differentiation and chondrocyte development. The protein is Kinesin-like protein KIF7 (Kif7) of Mus musculus (Mouse).